A 309-amino-acid chain; its full sequence is Bombesin receptor-activated protein C6orf89 homolog (309 aa).

At 1–59 the chain is on the cytoplasmic side; that stretch reads MGSSLSEPCIYDKLSESIDILRQSGYRYGMSEREIEKFIKQVLETNEPRREPPQFPILR. Residues 60–80 traverse the membrane as a helical segment; it reads ATVKFVVAVGVVLMAVLVFTY. Residues 81-309 are Extracellular-facing; the sequence is PQSPVLMGSV…QDVQCDSAVL (229 aa).

Homodimer.

It is found in the golgi apparatus membrane. The protein localises to the cytoplasm. In terms of biological role, exhibits histone deacetylase (HDAC) enhancer properties. May play a role in progression through the cell cycle. The sequence is that of Bombesin receptor-activated protein C6orf89 homolog from Danio rerio (Zebrafish).